We begin with the raw amino-acid sequence, 93 residues long: Small ribosomal subunit protein uS19c (93 aa).

The protein belongs to the universal ribosomal protein uS19 family.

It is found in the plastid. The protein localises to the chloroplast. Protein S19 forms a complex with S13 that binds strongly to the 16S ribosomal RNA. This Zea mays (Maize) protein is Small ribosomal subunit protein uS19c (rps19-A).